Consider the following 40-residue polypeptide: Photosystem II reaction center protein J (40 aa).

The helical transmembrane segment at 8-28 (IPLWLVATVAGLAAIGVLGIF) threads the bilayer.

It belongs to the PsbJ family. As to quaternary structure, PSII is composed of 1 copy each of membrane proteins PsbA, PsbB, PsbC, PsbD, PsbE, PsbF, PsbH, PsbI, PsbJ, PsbK, PsbL, PsbM, PsbT, PsbX, PsbY, PsbZ, Psb30/Ycf12, at least 3 peripheral proteins of the oxygen-evolving complex and a large number of cofactors. It forms dimeric complexes.

Its subcellular location is the plastid. The protein resides in the cyanelle thylakoid membrane. Functionally, one of the components of the core complex of photosystem II (PSII). PSII is a light-driven water:plastoquinone oxidoreductase that uses light energy to abstract electrons from H(2)O, generating O(2) and a proton gradient subsequently used for ATP formation. It consists of a core antenna complex that captures photons, and an electron transfer chain that converts photonic excitation into a charge separation. This Cyanophora paradoxa protein is Photosystem II reaction center protein J.